We begin with the raw amino-acid sequence, 572 residues long: Urocanate hydratase (572 aa).

NAD(+) contacts are provided by residues 48–49 (GG), Gln-126, 172–174 (GMG), Asp-192, 238–239 (NA), 259–263 (QTSAH), 268–269 (YL), and Tyr-317. Cys-405 is a catalytic residue. Position 487 (Gly-487) interacts with NAD(+). A compositionally biased stretch (basic and acidic residues) spans 550–559 (EGDEAHEGDA). The tract at residues 550-572 (EGDEAHEGDAAHGSGAAREGDGV) is disordered.

The protein belongs to the urocanase family. NAD(+) serves as cofactor.

It localises to the cytoplasm. The catalysed reaction is 4-imidazolone-5-propanoate = trans-urocanate + H2O. It functions in the pathway amino-acid degradation; L-histidine degradation into L-glutamate; N-formimidoyl-L-glutamate from L-histidine: step 2/3. Catalyzes the conversion of urocanate to 4-imidazolone-5-propionate. The protein is Urocanate hydratase of Streptomyces coelicolor (strain ATCC BAA-471 / A3(2) / M145).